Consider the following 215-residue polypeptide: Ribosomal RNA small subunit methyltransferase G (215 aa).

Residues Gly-73, Leu-78, 125-126 (AE), and Arg-140 contribute to the S-adenosyl-L-methionine site.

Belongs to the methyltransferase superfamily. RNA methyltransferase RsmG family.

It is found in the cytoplasm. Functionally, specifically methylates the N7 position of guanine in position 518 of 16S rRNA. The polypeptide is Ribosomal RNA small subunit methyltransferase G (Renibacterium salmoninarum (strain ATCC 33209 / DSM 20767 / JCM 11484 / NBRC 15589 / NCIMB 2235)).